The sequence spans 277 residues: MALKKYKPITNGRRNMTSLDFAEITKSTPEKSLLQPLPKKAGRNNQGKLTVRHHGGGHKRQYRVIDFKRNKDGITAKVDSIQYDPNRSANIALLVYADGEKRYIIAPKGLQVGQVVESGADADIKVGNALPLQNIPVGTVIHNIELKPGKGGQLARSAGASSQVLGKEGKYVLIRLRSGEVRMILSTCRATIGQVGNLQHELVNVGKAGRSRWKGIRPTVRGSVMNPNDHPHGGGEGRAPIGRPSPMSPWGKPTLGKKTRRGKKSSDKLIVRGRKKK.

Disordered stretches follow at residues 34–55 (LQPLPKKAGRNNQGKLTVRHHG) and 213–277 (WKGI…RKKK).

The protein belongs to the universal ribosomal protein uL2 family. Part of the 50S ribosomal subunit. Forms a bridge to the 30S subunit in the 70S ribosome.

In terms of biological role, one of the primary rRNA binding proteins. Required for association of the 30S and 50S subunits to form the 70S ribosome, for tRNA binding and peptide bond formation. It has been suggested to have peptidyltransferase activity; this is somewhat controversial. Makes several contacts with the 16S rRNA in the 70S ribosome. The sequence is that of Large ribosomal subunit protein uL2 from Staphylococcus haemolyticus (strain JCSC1435).